The chain runs to 177 residues: ATP-dependent protease subunit HslV (177 aa).

Residue Thr6 is part of the active site. The Na(+) site is built by Ser161, Cys164, and Thr167.

Belongs to the peptidase T1B family. HslV subfamily. In terms of assembly, a double ring-shaped homohexamer of HslV is capped on each side by a ring-shaped HslU homohexamer. The assembly of the HslU/HslV complex is dependent on binding of ATP.

Its subcellular location is the cytoplasm. It carries out the reaction ATP-dependent cleavage of peptide bonds with broad specificity.. With respect to regulation, allosterically activated by HslU binding. Functionally, protease subunit of a proteasome-like degradation complex believed to be a general protein degrading machinery. The sequence is that of ATP-dependent protease subunit HslV from Thermodesulfovibrio yellowstonii (strain ATCC 51303 / DSM 11347 / YP87).